We begin with the raw amino-acid sequence, 733 residues long: Ribosomal protein S6 kinase alpha-2 (733 aa).

The Protein kinase 1 domain occupies 59 to 318 (FELLKVLGQG…VEEIKRHPFF (260 aa)). ATP is bound by residues 65–73 (LGQGSYGKV) and Lys91. Asp184 acts as the Proton acceptor in catalysis. Phosphoserine; by PDPK1 is present on Ser218. In terms of domain architecture, AGC-kinase C-terminal spans 319 to 388 (VTIDWNKLYR…VASSLVQEPS (70 aa)). Residue Ser377 is modified to Phosphoserine. A Protein kinase 2 domain is found at 415-672 (YEIKEDIGVG…AVQVLKHPWI (258 aa)). ATP is bound by residues 421–429 (IGVGSYSVC) and Lys444. Asp532 functions as the Proton acceptor in the catalytic mechanism.

The protein belongs to the protein kinase superfamily. AGC Ser/Thr protein kinase family. S6 kinase subfamily. As to quaternary structure, forms a complex with either MAPK1/ERK2 or MAPK3/ERK1 in quiescent cells. Transiently dissociates following mitogenic stimulation. Interacts with FBXO5; cooperate to induce the metaphase arrest of early blastomeres; increases and stabilizes interaction of FBXO5 with CDC20. Requires Mg(2+) as cofactor. In terms of processing, activated by phosphorylation at Ser-218 by PDPK1. Autophosphorylated on Ser-377, as part of the activation process. May be phosphorylated at Thr-356 and Ser-360 by MAPK1/ERK2 and MAPK3/ERK1. N-terminal myristoylation results in an activated kinase in the absence of added growth factors.

It localises to the nucleus. Its subcellular location is the cytoplasm. The catalysed reaction is L-seryl-[protein] + ATP = O-phospho-L-seryl-[protein] + ADP + H(+). It carries out the reaction L-threonyl-[protein] + ATP = O-phospho-L-threonyl-[protein] + ADP + H(+). Its activity is regulated as follows. Upon extracellular signal or mitogen stimulation, phosphorylated at Thr-570 in the C-terminal kinase domain (CTKD) by MAPK1/ERK2 and MAPK3/ERK1. The activated CTKD then autophosphorylates Ser-377, allowing binding of PDPK1, which in turn phosphorylates Ser-218 in the N-terminal kinase domain (NTDK) leading to the full activation of the protein and subsequent phosphorylation of the substrates by the NTKD. Functionally, serine/threonine-protein kinase that acts downstream of ERK (MAPK1/ERK2 and MAPK3/ERK1) signaling and mediates mitogenic and stress-induced activation of transcription factors, regulates translation, and mediates cellular proliferation, survival, and differentiation. May function as tumor suppressor in epithelial ovarian cancer cells. In Mus musculus (Mouse), this protein is Ribosomal protein S6 kinase alpha-2 (Rps6ka2).